The sequence spans 311 residues: tRNA-cytidine(32) 2-sulfurtransferase (311 aa).

The PP-loop motif motif lies at 47–52 (SGGKDS). Cys122, Cys125, and Cys213 together coordinate [4Fe-4S] cluster.

The protein belongs to the TtcA family. In terms of assembly, homodimer. The cofactor is Mg(2+). [4Fe-4S] cluster is required as a cofactor.

Its subcellular location is the cytoplasm. It catalyses the reaction cytidine(32) in tRNA + S-sulfanyl-L-cysteinyl-[cysteine desulfurase] + AH2 + ATP = 2-thiocytidine(32) in tRNA + L-cysteinyl-[cysteine desulfurase] + A + AMP + diphosphate + H(+). It functions in the pathway tRNA modification. In terms of biological role, catalyzes the ATP-dependent 2-thiolation of cytidine in position 32 of tRNA, to form 2-thiocytidine (s(2)C32). The sulfur atoms are provided by the cysteine/cysteine desulfurase (IscS) system. The sequence is that of tRNA-cytidine(32) 2-sulfurtransferase from Salmonella paratyphi B (strain ATCC BAA-1250 / SPB7).